The following is a 94-amino-acid chain: uncharacterized protein (94 aa).

2 helical membrane-spanning segments follow: residues 7–24 (IFFI…SFNV) and 39–61 (AVPI…LLFL). The disordered stretch occupies residues 68–94 (TRKQKREDSPTSAPTGGVSSPEHVDVP).

Its subcellular location is the cell membrane. This is an uncharacterized protein from Treponema pallidum (strain Nichols).